A 365-amino-acid polypeptide reads, in one-letter code: MADTEVEMQVSAADTNNNENGQAQSNYEYDVNVQDEEDEAAAGPMPLQMLEGNGITASDIKKIHEAGYYTVESIAYTPKRQLLLIKGISEAKADKLLGEASKLVPMGFTTATEYHIRRSELITITTGSKQLDTLLQGGVETGSITELFGEFRTGKSQICHTLAVTCQLPIDMGGGEGKCLYIDTEGTFRPVRLLAVADRYGLNGEEVLDNVAYARAYNADHQLELLQQAANMMSESRFSLLVVDSCTALYRTDFSGRGELSARQMHLARFMRTLQRLADEFGIAVVITNQVVAQVDGISFNPDPKKPIGGNILAHSSTTRLSLRKGRGEQRICKIYDSPCLPESEAIFAINSDGVGDPKEIIAPV.

The tract at residues 1–25 is disordered; sequence MADTEVEMQVSAADTNNNENGQAQS. Polar residues predominate over residues 12–25; it reads AADTNNNENGQAQS. 149–156 is an ATP binding site; sequence GEFRTGKS.

This sequence belongs to the RecA family. RAD51 subfamily. In terms of assembly, interacts with rad22, rad54, rdh54, rhp54, rti1, swi2 and swi5. Forms homooiligomers.

It localises to the nucleus. Functionally, required both for recombination and for the repair of DNA damage caused by X-rays. Binds to single and double-stranded DNA, in the presence of magnesium, and exhibits DNA-dependent ATPase activity. Promotes DNA strand annealing and strand exchange via DNA recombinase activity and forms helical nucleoprotein filaments. The chain is DNA repair protein rhp51 (rhp51) from Schizosaccharomyces pombe (strain 972 / ATCC 24843) (Fission yeast).